Here is a 2319-residue protein sequence, read N- to C-terminus: Neurogenic locus notch homolog protein 3 (2319 aa).

Residues 1 to 14 (MGPGARGRRRRRRL) are compositionally biased toward basic residues. The interval 1-20 (MGPGARGRRRRRRLMALPPP) is disordered. The N-terminal stretch at 1-40 (MGPGARGRRRRRRLMALPPPPPPMRALPLLLLLLAGLGAA) is a signal peptide. 3 consecutive EGF-like domains span residues 41 to 79 (APPC…ERCQ), 80 to 120 (LEDP…PDCS), and 121 to 158 (LPDP…RNCR). At 41–1645 (APPCLDGSPC…LEPPEQSVPL (1605 aa)) the chain is on the extracellular side. 99 disulfides stabilise this stretch: cysteine 44–cysteine 56, cysteine 50–cysteine 67, cysteine 69–cysteine 78, cysteine 84–cysteine 95, cysteine 89–cysteine 108, cysteine 110–cysteine 119, cysteine 125–cysteine 136, cysteine 130–cysteine 146, cysteine 148–cysteine 157, cysteine 164–cysteine 176, cysteine 170–cysteine 185, cysteine 187–cysteine 196, cysteine 203–cysteine 214, cysteine 208–cysteine 224, cysteine 226–cysteine 235, cysteine 242–cysteine 253, cysteine 247–cysteine 262, cysteine 264–cysteine 273, cysteine 280–cysteine 293, cysteine 287–cysteine 302, cysteine 304–cysteine 313, cysteine 320–cysteine 331, cysteine 325–cysteine 340, cysteine 342–cysteine 351, cysteine 357–cysteine 368, cysteine 362–cysteine 379, cysteine 381–cysteine 390, cysteine 397–cysteine 410, cysteine 404–cysteine 419, cysteine 421–cysteine 430, cysteine 437–cysteine 448, cysteine 442–cysteine 457, cysteine 459–cysteine 468, cysteine 475–cysteine 486, cysteine 480–cysteine 495, cysteine 497–cysteine 506, cysteine 513–cysteine 524, cysteine 518–cysteine 533, cysteine 535–cysteine 544, cysteine 551–cysteine 561, cysteine 556–cysteine 570, cysteine 572–cysteine 581, cysteine 588–cysteine 599, cysteine 593–cysteine 608, cysteine 610–cysteine 619, cysteine 626–cysteine 636, cysteine 631–cysteine 645, cysteine 647–cysteine 656, cysteine 663–cysteine 674, cysteine 668–cysteine 683, cysteine 685–cysteine 694, cysteine 701–cysteine 711, cysteine 706–cysteine 720, cysteine 722–cysteine 731, cysteine 740–cysteine 751, cysteine 745–cysteine 760, cysteine 762–cysteine 771, cysteine 777–cysteine 788, cysteine 782–cysteine 798, cysteine 800–cysteine 809, cysteine 816–cysteine 828, cysteine 822–cysteine 837, cysteine 839–cysteine 848, cysteine 855–cysteine 866, cysteine 860–cysteine 875, cysteine 877–cysteine 886, cysteine 893–cysteine 903, cysteine 898–cysteine 912, cysteine 914–cysteine 923, cysteine 930–cysteine 941, cysteine 935–cysteine 950, cysteine 952–cysteine 961, cysteine 968–cysteine 979, cysteine 973–cysteine 988, cysteine 990–cysteine 999, cysteine 1006–cysteine 1017, cysteine 1011–cysteine 1024, cysteine 1026–cysteine 1035, cysteine 1042–cysteine 1063, cysteine 1057–cysteine 1072, cysteine 1074–cysteine 1083, cysteine 1090–cysteine 1101, cysteine 1095–cysteine 1110, cysteine 1112–cysteine 1121, cysteine 1128–cysteine 1139, cysteine 1133–cysteine 1148, cysteine 1150–cysteine 1159, cysteine 1166–cysteine 1184, cysteine 1178–cysteine 1193, cysteine 1195–cysteine 1204, cysteine 1211–cysteine 1224, cysteine 1216–cysteine 1234, cysteine 1236–cysteine 1245, cysteine 1252–cysteine 1263, cysteine 1257–cysteine 1277, cysteine 1279–cysteine 1288, cysteine 1295–cysteine 1306, cysteine 1300–cysteine 1315, and cysteine 1317–cysteine 1326. The region spanning 160 to 197 (DIDECRAGASCRHGGTCINTPGSFHCLCPLGYTGLLCE) is the EGF-like 4; calcium-binding domain. The region spanning 199–236 (PIVPCAPSPCRNGGTCRQSSDVTYDCACLPGFEGQNCE) is the EGF-like 5 domain. Residues 238-274 (NVDDCPGHRCLNGGTCVDGVNTYNCQCPPEWTGQFCT) form the EGF-like 6; calcium-binding domain. Positions 276–314 (DVDECQLQPNACHNGGTCFNLLGGHSCVCVNGWTGESCS) constitute an EGF-like 7 domain. Residues 316–352 (NIDDCATAVCFHGATCHDRVASFYCACPMGKTGLLCH) form the EGF-like 8; calcium-binding domain. In terms of domain architecture, EGF-like 9 spans 353–391 (LDDACVSNPCHEDAICDTNPVSGRAICTCPPGFTGGACD). Residues 393 to 431 (DVDECSIGANPCEHLGRCVNTQGSFLCQCGRGYTGPRCE) enclose the EGF-like 10; calcium-binding domain. Residues 433–469 (DVNECLSGPCRNQATCLDRIGQFTCICMAGFTGTFCE) enclose the EGF-like 11; calcium-binding domain. Residues 471 to 507 (DIDECQSSPCVNGGVCKDRVNGFSCTCPSGFSGSTCQ) enclose the EGF-like 12; calcium-binding domain. In terms of domain architecture, EGF-like 13; calcium-binding spans 509–545 (DVDECASTPCRNGAKCVDQPDGYECRCAEGFEGTLCE). The region spanning 547–582 (NVDDCSPDPCHHGRCVDGIASFSCACAPGYTGIRCE) is the EGF-like 14; calcium-binding domain. An EGF-like 15; calcium-binding domain is found at 584 to 620 (QVDECRSQPCRYGGKCLDLVDKYLCRCPPGTTGVNCE). One can recognise an EGF-like 16; calcium-binding domain in the interval 622 to 657 (NIDDCASNPCTFGVCRDGINRYDCVCQPGFTGPLCN). An EGF-like 17; calcium-binding domain is found at 659 to 695 (EINECASSPCGEGGSCVDGENGFHCLCPPGSLPPLCL). 3 EGF-like domains span residues 697–732 (ANHP…PRCS), 736–772 (APDA…HQCE), and 773–810 (VLSP…PRCQ). The 38-residue stretch at 812 to 849 (DVDECAGASPCGPHGTCTNLPGSFRCICHGGYTGPFCD) folds into the EGF-like 21; calcium-binding domain. Residues 851 to 887 (DIDDCDPNPCLNGGSCQDGVGSFSCSCLSGFAGPRCA) enclose the EGF-like 22; calcium-binding domain. Residues 889–924 (DVDECLSSPCGPGTCTDHVASFTCTCPPGYGGFHCE) enclose the EGF-like 23; calcium-binding domain. EGF-like domains lie at 926–962 (DLLD…THCQ), 964–1000 (KVDP…NQCQ), 1002–1036 (PVDW…PLCD), 1038–1084 (PSLP…SHCE), and 1086–1122 (EVDP…DSCE). The 37-residue stretch at 1124–1160 (DVDECASQPCQNGGSCIDLVAHYLCSCPPGTLGVLCE) folds into the EGF-like 29; calcium-binding domain. The 44-residue stretch at 1162-1205 (NEDDCGPGPSLDSGLRCLHNGTCVDLVGGFRCNCPPGYTGLHCE) folds into the EGF-like 30; calcium-binding domain. Asparagine 1181 carries N-linked (GlcNAc...) asparagine glycosylation. 4 EGF-like domains span residues 1207–1246 (DINE…PRCQ), 1248–1289 (ALFP…LRCE), 1291–1327 (VARS…PSCR), and 1337–1375 (TNTS…PRCE). Residue asparagine 1338 is glycosylated (N-linked (GlcNAc...) asparagine). 12 disulfides stabilise this stretch: cysteine 1341–cysteine 1352, cysteine 1346–cysteine 1363, cysteine 1365–cysteine 1374, cysteine 1389–cysteine 1412, cysteine 1394–cysteine 1407, cysteine 1403–cysteine 1419, cysteine 1430–cysteine 1453, cysteine 1435–cysteine 1448, cysteine 1444–cysteine 1460, cysteine 1469–cysteine 1495, cysteine 1477–cysteine 1490, and cysteine 1486–cysteine 1502. LNR repeat units follow at residues 1389–1429 (CPRA…PWRQ), 1430–1467 (CEAL…GRDR), and 1469–1507 (CNPV…SEVP). Residue asparagine 1440 is glycosylated (N-linked (GlcNAc...) asparagine). The helical transmembrane segment at 1646-1666 (LPLLVAGAVFLLVIFVLGVMV) threads the bilayer. The Cytoplasmic segment spans residues 1667 to 2319 (ARRKREHSTL…EVTPKRQVMA (653 aa)). ANK repeat units follow at residues 1840–1869 (TGET…DTNA), 1873–1903 (SGRT…DLDA), 1907–1936 (DGST…DVNA), 1940–1969 (LGKS…NKDM), and 1973–2002 (KEET…NREI). Disordered regions lie at residues 2026–2046 (LDQP…PLLC) and 2059–2129 (QSGT…EGPY). Residues 2029–2046 (PSGPRSPSGPHGLGPLLC) are compositionally biased toward low complexity. Arginine 2175 bears the Omega-N-methylarginine mark. Residues 2197–2319 (LNPATPVSPH…EVTPKRQVMA (123 aa)) are disordered. Residues 2263–2288 (SLSDWSDSTPSPATATSATAAGALPA) show a composition bias toward low complexity. A compositionally biased stretch (polar residues) spans 2297–2306 (SLPQSQTQLG).

It belongs to the NOTCH family. Heterodimer of a C-terminal fragment N(TM) and a N-terminal fragment N(EC) which are probably linked by disulfide bonds. Interacts with MAML1, MAML2 and MAML3 which act as transcriptional coactivators for NOTCH3. Interacts with PSMA1. Interacts with HIF1AN. Post-translationally, synthesized in the endoplasmic reticulum as an inactive form which is proteolytically cleaved by a furin-like convertase in the trans-Golgi network before it reaches the plasma membrane to yield an active, ligand-accessible form. Cleavage results in a C-terminal fragment N(TM) and a N-terminal fragment N(EC). Following ligand binding, it is cleaved by TNF-alpha converting enzyme (TACE) to yield a membrane-associated intermediate fragment called notch extracellular truncation (NEXT). This fragment is then cleaved by presenilin dependent gamma-secretase to release a notch-derived peptide containing the intracellular domain (NICD) from the membrane. Phosphorylated. In terms of processing, hydroxylated by HIF1AN. Expressed in postnatal central nervous system (CNS) germinal zones and, in early postnatal life, within numerous cells throughout the CNS. It is more highly localized to ventricular germinal zones.

Its subcellular location is the cell membrane. It localises to the nucleus. Functionally, functions as a receptor for membrane-bound ligands Jagged1, Jagged2 and Delta1 to regulate cell-fate determination. Upon ligand activation through the released notch intracellular domain (NICD) it forms a transcriptional activator complex with RBPJ/RBPSUH and activates genes of the enhancer of split locus. Affects the implementation of differentiation, proliferation and apoptotic programs. Acts instructively to control the cell fate determination of CNS multipotent progenitor cells, resulting in astroglial induction and neuron/oligodendrocyte suppression. This chain is Neurogenic locus notch homolog protein 3 (Notch3), found in Rattus norvegicus (Rat).